The primary structure comprises 139 residues: Large ribosomal subunit protein uL16 (139 aa).

This sequence belongs to the universal ribosomal protein uL16 family. Part of the 50S ribosomal subunit.

In terms of biological role, binds 23S rRNA and is also seen to make contacts with the A and possibly P site tRNAs. The chain is Large ribosomal subunit protein uL16 from Rippkaea orientalis (strain PCC 8801 / RF-1) (Cyanothece sp. (strain PCC 8801)).